A 363-amino-acid chain; its full sequence is 3-isopropylmalate dehydrogenase (363 aa).

78-91 (GPKWENLPPESQPE) provides a ligand contact to NAD(+). Positions 99, 109, 138, and 227 each coordinate substrate. The Mg(2+) site is built by aspartate 227, aspartate 251, and aspartate 255. 285 to 297 (GSAPDIAGKNIAN) contributes to the NAD(+) binding site.

It belongs to the isocitrate and isopropylmalate dehydrogenases family. LeuB type 1 subfamily. As to quaternary structure, homodimer. Mg(2+) serves as cofactor. Mn(2+) is required as a cofactor.

The protein localises to the cytoplasm. The enzyme catalyses (2R,3S)-3-isopropylmalate + NAD(+) = 4-methyl-2-oxopentanoate + CO2 + NADH. The protein operates within amino-acid biosynthesis; L-leucine biosynthesis; L-leucine from 3-methyl-2-oxobutanoate: step 3/4. Catalyzes the oxidation of 3-carboxy-2-hydroxy-4-methylpentanoate (3-isopropylmalate) to 3-carboxy-4-methyl-2-oxopentanoate. The product decarboxylates to 4-methyl-2 oxopentanoate. This Salmonella choleraesuis (strain SC-B67) protein is 3-isopropylmalate dehydrogenase.